A 251-amino-acid polypeptide reads, in one-letter code: uncharacterized protein (251 aa).

The 116-residue stretch at 3–118 folds into the Response regulatory domain; it reads KVIICDDERI…QLEHILDILV (116 aa). A 4-aspartylphosphate modification is found at Asp-55. The region spanning 152–249 is the HTH araC/xylS-type domain; it reads NQILSQIKQH…HMSPSDYNKQ (98 aa). DNA-binding regions (H-T-H motif) lie at residues 169–190 and 216–239; these read LDLI…KEHV and HYEI…KKYL.

In terms of processing, phosphorylated by SERP2405.

It localises to the cytoplasm. Probable member of the two-component regulatory system SERP2405/SERP2406. This is an uncharacterized protein from Staphylococcus epidermidis (strain ATCC 35984 / DSM 28319 / BCRC 17069 / CCUG 31568 / BM 3577 / RP62A).